The chain runs to 44 residues: Protein PsbN (44 aa).

A helical membrane pass occupies residues Phe6 to Ile26.

Belongs to the PsbN family.

Its subcellular location is the plastid. The protein localises to the chloroplast thylakoid membrane. In terms of biological role, may play a role in photosystem I and II biogenesis. This is Protein PsbN from Oedogonium cardiacum (Filamentous green alga).